A 455-amino-acid chain; its full sequence is GTPase Der (455 aa).

EngA-type G domains follow at residues 4–174 (PIVA…PAGQ) and 183–358 (LKIA…SERN). Residues 10 to 17 (GRPNVGKS), 57 to 61 (DTAGL), 126 to 129 (NKAD), 189 to 196 (GRPNVGKS), 236 to 240 (DTAGI), and 301 to 304 (NKWD) each bind GTP. In terms of domain architecture, KH-like spans 359–444 (KRVSTSDINN…PIILVFKGRE (86 aa)).

This sequence belongs to the TRAFAC class TrmE-Era-EngA-EngB-Septin-like GTPase superfamily. EngA (Der) GTPase family. In terms of assembly, associates with the 50S ribosomal subunit.

In terms of biological role, GTPase that plays an essential role in the late steps of ribosome biogenesis. The chain is GTPase Der from Herpetosiphon aurantiacus (strain ATCC 23779 / DSM 785 / 114-95).